We begin with the raw amino-acid sequence, 347 residues long: Two pore potassium channel a (347 aa).

Positions M1–L11 are enriched in polar residues. Residues M1 to S49 are disordered. The Cytoplasmic portion of the chain corresponds to M1 to R65. Residues L66–M86 form a helical membrane-spanning segment. The pore-forming intramembrane region spans D99–P118. The chain crosses the membrane as a helical span at residues L125–V145. Over A146–Y183 the chain is Cytoplasmic. Residues K184–W204 traverse the membrane as a helical segment. Residues D213–F232 constitute an intramembrane region (pore-forming). Residues V239 to L259 traverse the membrane as a helical segment. Topologically, residues A260 to Q347 are cytoplasmic. EF-hand domains follow at residues L276–K311 and E315–Q347. Ca(2+) contacts are provided by D289, D291, D293, Q295, E300, D328, D330, S332, T334, and D339.

The protein belongs to the two pore domain potassium channel (TC 1.A.1.7) family. In terms of assembly, homodimer.

Its subcellular location is the vacuole membrane. Its function is as follows. Highly selective inward-rectifying potassium channel that is specifically located in the tonoplast of large vacuoles. Functions independently of the voltage difference across the membrane. This Oryza sativa subsp. japonica (Rice) protein is Two pore potassium channel a (TPKA).